Here is a 388-residue protein sequence, read N- to C-terminus: Gastricsin (388 aa).

Positions 1-16 are cleaved as a signal peptide; sequence MKWLLVALVCLHLLEA. The propeptide at 17–59 is activation peptide; the sequence is AVIKVPLRKFKSIRETLKEKGLLKEFLNTHKYDPALKYRFGDF. The 313-residue stretch at 73 to 385 folds into the Peptidase A1 domain; the sequence is YFGEISIGTP…DMANNRVGFA (313 aa). Asp-91 is a catalytic residue. 2 disulfide bridges follow: Cys-104/Cys-109 and Cys-267/Cys-271. Residue Asp-276 is part of the active site. Cys-310 and Cys-343 are disulfide-bonded.

Belongs to the peptidase A1 family.

The protein localises to the secreted. The catalysed reaction is More restricted specificity than pepsin A, but shows preferential cleavage at Tyr-|-Xaa bonds. High activity on hemoglobin.. Hydrolyzes a variety of proteins. The protein is Gastricsin (PGC) of Oryctolagus cuniculus (Rabbit).